The sequence spans 71 residues: Large ribosomal subunit protein bL31 (71 aa).

Residues Cys16, Cys18, Cys37, and Cys40 each coordinate Zn(2+).

The protein belongs to the bacterial ribosomal protein bL31 family. Type A subfamily. Part of the 50S ribosomal subunit. The cofactor is Zn(2+).

Its function is as follows. Binds the 23S rRNA. In Pseudoalteromonas atlantica (strain T6c / ATCC BAA-1087), this protein is Large ribosomal subunit protein bL31.